A 379-amino-acid polypeptide reads, in one-letter code: Alcohol dehydrogenase 1 (379 aa).

Zn(2+) is bound by residues C47, T49, H69, C99, C102, C105, C113, and C177. The an alcohol site is built by T49 and H69. Residue T49 coordinates NAD(+). Residues 202 to 207 (GLGAVG), D226, R231, T272, V295, 295 to 297 (VGV), F322, and R372 contribute to the NAD(+) site.

This sequence belongs to the zinc-containing alcohol dehydrogenase family. In terms of assembly, homodimer. Zn(2+) is required as a cofactor.

It is found in the cytoplasm. It catalyses the reaction a primary alcohol + NAD(+) = an aldehyde + NADH + H(+). The catalysed reaction is a secondary alcohol + NAD(+) = a ketone + NADH + H(+). This chain is Alcohol dehydrogenase 1 (ADH1), found in Zea mays (Maize).